The primary structure comprises 545 residues: Coiled-coil domain-containing protein 60 (545 aa).

Residues 72–99 are a coiled coil; that stretch reads NILREENAMKKKQQLLQKLKEEELNKFQ. The interval 224–284 is disordered; the sequence is PAIRTAMASR…DNESSSTKPE (61 aa). Over residues 238–259 the composition is skewed to low complexity; that stretch reads RGSTLSLTRTSGGSSPQSSMMS.

The protein is Coiled-coil domain-containing protein 60 (Ccdc60) of Mus musculus (Mouse).